The primary structure comprises 445 residues: Argininosuccinate synthase (445 aa).

Residues 17-25 (AFSGGLDTS) and Ala43 contribute to the ATP site. An L-citrulline-binding site is contributed by Tyr99. 2 residues coordinate ATP: Gly129 and Thr131. L-aspartate is bound by residues Thr131, Asn135, and Asp136. Asn135 contributes to the L-citrulline binding site. Asp136 is a binding site for ATP. The L-citrulline site is built by Arg139 and Ser192. Asp194 contributes to the ATP binding site. Thr201, Glu203, and Glu280 together coordinate L-citrulline.

This sequence belongs to the argininosuccinate synthase family. Type 2 subfamily. As to quaternary structure, homotetramer.

It is found in the cytoplasm. The enzyme catalyses L-citrulline + L-aspartate + ATP = 2-(N(omega)-L-arginino)succinate + AMP + diphosphate + H(+). Its pathway is amino-acid biosynthesis; L-arginine biosynthesis; L-arginine from L-ornithine and carbamoyl phosphate: step 2/3. This is Argininosuccinate synthase from Burkholderia cenocepacia (strain HI2424).